The sequence spans 206 residues: Inner membrane protein YnjF (206 aa).

Residues 1–37 (MLDRHLHPRIKPLLHQCVRVLDKPGITPDGLTLVGFA) lie on the Periplasmic side of the membrane. Residues 38 to 60 (IGVLALPFLALGWYLAALVVILL) form a helical membrane-spanning segment. The Cytoplasmic segment spans residues 61-79 (NRLLDGLDGALARRRELTD). The chain crosses the membrane as a helical span at residues 80-102 (AGGFLDISLDFLFYALVPFGFIL). Topologically, residues 103 to 111 (AAPEQNALA) are periplasmic. Residues 112-134 (GGWLLFAFIGTGSSFLAFAALAA) traverse the membrane as a helical segment. At 135 to 146 (KHQIDNPGYAHK) the chain is on the cytoplasmic side. Residues 147–169 (SFYYLGGLTEGTETILLFVLGCL) traverse the membrane as a helical segment. Residues 170–173 (FPAW) lie on the Periplasmic side of the membrane. Residues 174–196 (FAWFAWIFGALCWMTTFTRVWSG) form a helical membrane-spanning segment. Topologically, residues 197–206 (YLTLKSLQRQ) are cytoplasmic.

The protein belongs to the CDP-alcohol phosphatidyltransferase class-I family.

It localises to the cell inner membrane. The chain is Inner membrane protein YnjF (ynjF) from Escherichia coli (strain K12).